A 452-amino-acid chain; its full sequence is Probable ECA polymerase (452 aa).

The next 11 helical transmembrane spans lie at 6–26 (FSGLLVVWLLSTLFIATLTWF), 37–57 (VFFSLLFLLTFFFGFPLTSVL), 63–83 (VGVAPPEILLQALLSAACFYG), 118–138 (VILMGIALVSVAIFFMHNGFL), 155–175 (GVALKRFFYFFIPAMLVVYFL), 181–201 (AWLFFLVSTVAFGLLTYMIVG), 207–227 (IIIAFAIFLFIGIIRGWISLW), 228–248 (MLVAAGVLGIVGMFWLALKRY), 341–361 (LVVMGGALFIPLGAIVVGLII), 378–398 (YKAAILHSFCFGAIFNMIVLA), and 410–430 (VFFLVVFGASLLVAKLLFWLF).

It belongs to the WzyE family. Probably part of a complex composed of WzxE, WzyE and WzzE.

The protein localises to the cell inner membrane. Its pathway is bacterial outer membrane biogenesis; enterobacterial common antigen biosynthesis. Probably involved in the polymerization of enterobacterial common antigen (ECA) trisaccharide repeat units. This is Probable ECA polymerase from Salmonella agona (strain SL483).